The primary structure comprises 335 residues: Mycobacterial beta-ketoacyl-[acyl-carrier-protein] synthase III (335 aa).

Catalysis depends on residues Cys-122 and His-258. The ACP-binding stretch occupies residues 259 to 263 (QANSR). Asn-289 is a catalytic residue.

The protein belongs to the thiolase-like superfamily. FabH family. As to quaternary structure, homodimer.

It localises to the cytoplasm. It carries out the reaction malonyl-[ACP] + dodecanoyl-CoA + H(+) = 3-oxotetradecanoyl-[ACP] + CO2 + CoA. It participates in lipid metabolism; fatty acid biosynthesis. The protein operates within lipid metabolism; mycolic acid biosynthesis. Functionally, catalyzes the condensation reaction of fatty acid synthesis by the addition to an acyl acceptor of two carbons from malonyl-ACP. Catalyzes the first condensation reaction which initiates fatty acid synthesis and may therefore play a role in governing the total rate of fatty acid production. Possesses both acetoacetyl-ACP synthase and acetyl transacylase activities. Its substrate specificity determines the biosynthesis of branched-chain and/or straight-chain of fatty acids. This is Mycobacterial beta-ketoacyl-[acyl-carrier-protein] synthase III from Mycobacterium ulcerans (strain Agy99).